The chain runs to 361 residues: MKALILVGGFGTRLRPLTLSVPKPLVDFGNKPMILHQIEALKEVGVTEVVLAINYQPEVMLNFLKDFESKLGIKITCSQETEPLGTAGPLALARDKLADGSGDPFFVLNSDVISEYPFAELIQFHKSHGGEATIMVTKVDEPSKYGVVVMEDETDKVERFVEKPKVFVGNKINAGIYLLNPSVLDRIELKPTSIEKEVFPRIAADNGLFAMVLPGFWMDIGQPRDYITGLRLYLDSLRKKAPAKLASGAHVLGNVLVHETAVIGEGCLIGPDVAVGPGCVVEAGVRLSRCTVMRGARVKKHACISSSIIGWHSTVGMWARVENMTILGEDVHVCDEVYSNGGVVLPHKEIKSSILKPEIVM.

Residues leucine 6 and valine 7 each contribute to the GDP-alpha-D-mannose site. The diphosphate site is built by glycine 9, glycine 11, threonine 12, arginine 13, and lysine 23. Positions 85, 109, 111, 146, and 173 each coordinate GDP-alpha-D-mannose.

Belongs to the transferase hexapeptide repeat family.

It catalyses the reaction alpha-D-mannose 1-phosphate + GTP + H(+) = GDP-alpha-D-mannose + diphosphate. It functions in the pathway nucleotide-sugar biosynthesis; GDP-alpha-D-mannose biosynthesis; GDP-alpha-D-mannose from alpha-D-mannose 1-phosphate (GTP route): step 1/1. Catalyzes a reaction of the Smirnoff-Wheeler pathway, the major route to ascorbate biosynthesis in plants. This Oryza sativa subsp. japonica (Rice) protein is Probable mannose-1-phosphate guanylyltransferase 1.